We begin with the raw amino-acid sequence, 651 residues long: MGDLSSLTPGGSMGLQVNRGSQSSLEGAPATAPEPHSLGILHASYSVSHRVRPWWDITSCRQQWTRQILKDVSLYVESGQIMCILGSSGSGKTTLLDAMSGRLGRAGTFLGEVYVNGRALRREQFQDCFSYVLQSDTLLSSLTVRETLHYTALLAIRRGNPGSFQKKVEAVMAELSLSHVADRLIGNYSLGGISTGERRRVSIAAQLLQDPKVMLFDEPTTGLDCMTANQIVVLLVELARRNRIVVLTIHQPRSELFQLFDKIAILSFGELIFCGTPAEMLDFFNDCGYPCPEHSNPFDFYMDLTSVDTQSKEREIETSKRVQMIESAYKKSAICHKTLKNIERMKHLKTLPMVPFKTKDSPGVFSKLGVLLRRVTRNLVRNKLAVITRLLQNLIMGLFLLFFVLRVRSNVLKGAIQDRVGLLYQFVGATPYTGMLNAVNLFPVLRAVSDQESQDGLYQKWQMMLAYALHVLPFSVVATMIFSSVCYWTLGLHPEVARFGYFSAALLAPHLIGEFLTLVLLGIVQNPNIVNSVVALLSIAGVLVGSGFLRNIQEMPIPFKIISYFTFQKYCSEILVVNEFYGLNFTCGSSNVSVTTNPMCAFTQGIQFIEKTCPGATSRFTMNFLILYSFIPALVILGIVVFKIRDHLISR.

The interval M1–A32 is disordered. Over M1–K383 the chain is Cytoplasmic. In terms of domain architecture, ABC transporter spans R52–E293. G86–T93 is an ATP binding site. Residues L384–V404 form a helical membrane-spanning segment. Residues T388–R645 enclose the ABC transmembrane type-2 domain. Over L405 to G421 the chain is Extracellular. Residues L422–F442 form a helical membrane-spanning segment. At P443–Y467 the chain is on the cytoplasmic side. A helical transmembrane segment spans residues A468–T489. The Extracellular segment spans residues L490–G500. The helical transmembrane segment at Y501–L521 threads the bilayer. Residues G522–N528 lie on the Cytoplasmic side of the membrane. The helical transmembrane segment at I529–L549 threads the bilayer. Residues R550–N623 are Extracellular-facing. Residues N584 and N591 are each glycosylated (N-linked (GlcNAc...) asparagine). A helical membrane pass occupies residues F624–I644. Topologically, residues R645 to R651 are cytoplasmic.

This sequence belongs to the ABC transporter superfamily. ABCG family. Eye pigment precursor importer (TC 3.A.1.204) subfamily. In terms of assembly, heterodimer with ABCG8. Mg(2+) serves as cofactor. Post-translationally, N-glycosylated. In terms of tissue distribution, strongly expressed in the liver, lower levels in the small intestine and colon.

Its subcellular location is the cell membrane. It is found in the apical cell membrane. It catalyses the reaction cholesterol(in) + ATP + H2O = cholesterol(out) + ADP + phosphate + H(+). The catalysed reaction is sitosterol(in) + ATP + H2O = sitosterol(out) + ADP + phosphate + H(+). Its activity is regulated as follows. The ATPase activity of the heterodimer is stimulated by cholate. Taurocholate, glycocholate, taurochenodeoxycholate, glycochenodeoxycholate and taurodeoxycholate also stimulate ATPase activity, but to a lower degree. Glycodeoxycholate has no significant effect on ATPase activity. ATPase activity is inhibited by vanadate and by berillium fluoride. Functionally, ABCG5 and ABCG8 form an obligate heterodimer that mediates Mg(2+)- and ATP-dependent sterol transport across the cell membrane. Plays an essential role in the selective transport of dietary plant sterols and cholesterol in and out of the enterocytes and in the selective sterol excretion by the liver into bile. Required for normal sterol homeostasis. The heterodimer with ABCG8 has ATPase activity. The protein is ATP-binding cassette sub-family G member 5 of Homo sapiens (Human).